An 88-amino-acid chain; its full sequence is Small ribosomal subunit protein uS17 (88 aa).

The protein belongs to the universal ribosomal protein uS17 family. As to quaternary structure, part of the 30S ribosomal subunit.

In terms of biological role, one of the primary rRNA binding proteins, it binds specifically to the 5'-end of 16S ribosomal RNA. This chain is Small ribosomal subunit protein uS17, found in Pseudomonas putida (strain ATCC 700007 / DSM 6899 / JCM 31910 / BCRC 17059 / LMG 24140 / F1).